Reading from the N-terminus, the 139-residue chain is Large ribosomal subunit protein uL16 (139 aa).

Belongs to the universal ribosomal protein uL16 family. Part of the 50S ribosomal subunit.

Binds 23S rRNA and is also seen to make contacts with the A and possibly P site tRNAs. The sequence is that of Large ribosomal subunit protein uL16 from Chlorobium luteolum (strain DSM 273 / BCRC 81028 / 2530) (Pelodictyon luteolum).